A 159-amino-acid chain; its full sequence is Small ribosomal subunit protein uS9 (159 aa).

It belongs to the universal ribosomal protein uS9 family.

The protein is Small ribosomal subunit protein uS9 of Rickettsia africae (strain ESF-5).